Reading from the N-terminus, the 108-residue chain is Ribulose bisphosphate carboxylase small subunit (108 aa).

This sequence belongs to the RuBisCO small chain family. As to quaternary structure, heterohexadecamer of 8 large and 8 small subunits.

In terms of biological role, ruBisCO catalyzes two reactions: the carboxylation of D-ribulose 1,5-bisphosphate, the primary event in carbon dioxide fixation, as well as the oxidative fragmentation of the pentose substrate. Both reactions occur simultaneously and in competition at the same active site. Although the small subunit is not catalytic it is essential for maximal activity. This Nitrobacter vulgaris protein is Ribulose bisphosphate carboxylase small subunit.